We begin with the raw amino-acid sequence, 369 residues long: Peptide chain release factor 2 (369 aa).

The residue at position 250 (Gln-250) is an N5-methylglutamine.

It belongs to the prokaryotic/mitochondrial release factor family. In terms of processing, methylated by PrmC. Methylation increases the termination efficiency of RF2.

The protein resides in the cytoplasm. Its function is as follows. Peptide chain release factor 2 directs the termination of translation in response to the peptide chain termination codons UGA and UAA. The sequence is that of Peptide chain release factor 2 (prfB) from Rickettsia prowazekii (strain Madrid E).